Here is a 340-residue protein sequence, read N- to C-terminus: Fructose-1,6-bisphosphatase class 1 (340 aa).

Mg(2+) is bound by residues glutamate 107, aspartate 126, leucine 128, and aspartate 129. Asparagine 215 is a substrate binding site. Residue glutamate 287 participates in Mg(2+) binding.

It belongs to the FBPase class 1 family. As to quaternary structure, homotetramer. Requires Mg(2+) as cofactor.

The protein resides in the cytoplasm. It catalyses the reaction beta-D-fructose 1,6-bisphosphate + H2O = beta-D-fructose 6-phosphate + phosphate. The protein operates within carbohydrate biosynthesis; gluconeogenesis. This chain is Fructose-1,6-bisphosphatase class 1, found in Brucella ovis (strain ATCC 25840 / 63/290 / NCTC 10512).